A 180-amino-acid chain; its full sequence is UPF0227 protein Shew_1627 (180 aa).

This sequence belongs to the UPF0227 family.

This Shewanella loihica (strain ATCC BAA-1088 / PV-4) protein is UPF0227 protein Shew_1627.